The primary structure comprises 140 residues: Encapsulated ferritin-like protein (140 aa).

Glu31 serves as a coordination point for Ca(2+). Glu32 is a Fe cation binding site. Glu34 lines the Ca(2+) pocket. Positions 62 and 65 each coordinate Fe cation. Positions 100–140 (ADTAGEGSGGDAAKGATAQGDGSLGIGSLKGEAALARPPRL) are disordered. Residues 100–140 (ADTAGEGSGGDAAKGATAQGDGSLGIGSLKGEAALARPPRL) form a targeting peptide region.

This sequence belongs to the ferritin-like superfamily. EncFtn family. As to quaternary structure, monomers form antiparallel dimers which assemble in a decameric ring 7 nm in diameter and 4.5 nm thick with a central channel (construct without targeting peptide). Growth in Fe(2+)-rich medium induces oligomerization, the monomer does not bind metals. The target peptide probably extends away from the ring, to allow binding to the interior of the encapsulin nanocompartment shell. Fe(2+) serves as cofactor. Ca(2+) is required as a cofactor.

It is found in the encapsulin nanocompartment. It catalyses the reaction 4 Fe(2+) + O2 + 4 H(+) = 4 Fe(3+) + 2 H2O. Ferroxidase activity inhibited by Zn(2+). Mutants at Glu-31, Glu-34 and Trp-38 are also inhibited by Zn(2+). Its function is as follows. Cargo protein of a type 1 encapsulin nanocompartment. A ferritin-like ferroxidase that mineralizes iron inside the encapsulin nanocompartment. Converts Fe(2+) to Fe(3+) that is released to the exterior of the decameric complex for deposition in the encapsulin nanocompartment. In solution the decamer binds 10-15 iron cations; in the encapsulin nanocompartment the decamer can bind up to 48 ions, perhaps via its internal channel and on its exterior. The empty encapsulin nanocompartment sequesters about 2200 Fe ions while the cargo-loaded nanocompartment can maximally sequester about 4150 Fe ions. EncFtn retains ferroxidase activity when encapsulated. Flux in the active site di-iron metal center is thought to be controlled by the 'entry site' of the protein, which both attracts metal and controls the rate of iron oxidation. Encapsulation in the nanocompartment does not alter either function of this protein. The sequence is that of Encapsulated ferritin-like protein from Rhodospirillum rubrum (strain ATCC 11170 / ATH 1.1.1 / DSM 467 / LMG 4362 / NCIMB 8255 / S1).